The primary structure comprises 762 residues: Mediator of RNA polymerase II transcription subunit 15 (762 aa).

Disordered stretches follow at residues 70-102 (AQQAQQDGGGNSSQQGGGGGGGGSGMPDPINAL), 311-330 (GVGHGGPAMQQQQQAGGMGP), and 406-494 (GSGG…LNPQ). The span at 76–94 (DGGGNSSQQGGGGGGGGSG) shows a compositional bias: gly residues. Polar residues predominate over residues 465-481 (QRSTIGQSPGGSLNTPG).

This sequence belongs to the Mediator complex subunit 15 family. In terms of assembly, component of the Mediator complex.

The protein resides in the nucleus. Functionally, component of the Mediator complex, a coactivator involved in the regulated transcription of nearly all RNA polymerase II-dependent genes. Mediator functions as a bridge to convey information from gene-specific regulatory proteins to the basal RNA polymerase II transcription machinery. Mediator is recruited to promoters by direct interactions with regulatory proteins and serves as a scaffold for the assembly of a functional preinitiation complex with RNA polymerase II and the general transcription factors. The protein is Mediator of RNA polymerase II transcription subunit 15 (MED15) of Anopheles gambiae (African malaria mosquito).